Consider the following 385-residue polypeptide: Glutamate 5-kinase (385 aa).

Lysine 17 is a binding site for ATP. Substrate contacts are provided by serine 64, aspartate 151, and asparagine 165. An ATP-binding site is contributed by 185 to 186 (SD). Residues 291–367 (SGTVRVDAGA…DQIENVLGYS (77 aa)) form the PUA domain.

This sequence belongs to the glutamate 5-kinase family.

It is found in the cytoplasm. It catalyses the reaction L-glutamate + ATP = L-glutamyl 5-phosphate + ADP. Its pathway is amino-acid biosynthesis; L-proline biosynthesis; L-glutamate 5-semialdehyde from L-glutamate: step 1/2. In terms of biological role, catalyzes the transfer of a phosphate group to glutamate to form L-glutamate 5-phosphate. This chain is Glutamate 5-kinase, found in Methanosarcina mazei (strain ATCC BAA-159 / DSM 3647 / Goe1 / Go1 / JCM 11833 / OCM 88) (Methanosarcina frisia).